The sequence spans 310 residues: Manganese ABC transporter substrate-binding lipoprotein PsaA (310 aa).

An N-terminal signal peptide occupies residues 1–20 (MKKIASVLALFVALLFGLLA). The N-palmitoyl cysteine moiety is linked to residue Cys21. Cys21 is lipidated: S-diacylglycerol cysteine. 4 residues coordinate Mn(2+): His68, His140, Glu206, and Asp281.

This sequence belongs to the bacterial solute-binding protein 9 family. Lipoprotein receptor antigen (Lrai) subfamily.

Its subcellular location is the cell membrane. Functionally, part of the ATP-binding cassette (ABC) transport system PsaABC involved in manganese import. Binds manganese with high affinity and specificity and delivers it to the membrane permease for translocation into the cytoplasm. Also acts as an adhesin which is involved on adherence to extracellular matrix. The polypeptide is Manganese ABC transporter substrate-binding lipoprotein PsaA (Streptococcus pneumoniae).